The chain runs to 722 residues: Peroxisomal bifunctional enzyme (722 aa).

Residues 1-281 are enoyl-CoA hydratase / isomerase; the sequence is MAEYLRLPHS…FAEKSANKWS (281 aa). The residue at position 2 (A2) is a Blocked amino end (Ala). K38 carries the post-translational modification N6-succinyllysine. Substrate is bound at residue G100. Residue K173 is modified to N6-acetyllysine; alternate. K173 is subject to N6-succinyllysine; alternate. Position 182 is an N6-succinyllysine (K182). N6-acetyllysine; alternate is present on residues K190 and K218. Residues K190 and K218 each carry the N6-succinyllysine; alternate modification. The residue at position 241 (K241) is an N6-succinyllysine. Position 249 is an N6-acetyllysine (K249). K253 carries the post-translational modification N6-succinyllysine. At K275 the chain carries N6-acetyllysine; alternate. K275 carries the N6-succinyllysine; alternate modification. 3 positions are modified to N6-succinyllysine: K279, K289, and K330. A 3-hydroxyacyl-CoA dehydrogenase region spans residues 282 to 571; the sequence is TPSGASWKTA…DMLCEAGRFG (290 aa). N6-acetyllysine is present on residues K345, K359, and K463. The residue at position 531 (K531) is an N6-succinyllysine. T547 is modified (phosphothreonine). An N6-succinyllysine modification is found at K576. 3 positions are modified to N6-acetyllysine; alternate: K583, K590, and K709. Residues K583, K590, and K709 each carry the N6-succinyllysine; alternate modification. The Microbody targeting signal signature appears at 720–722; that stretch reads SKL. An N6-succinyllysine modification is found at K721.

This sequence in the N-terminal section; belongs to the enoyl-CoA hydratase/isomerase family. It in the C-terminal section; belongs to the 3-hydroxyacyl-CoA dehydrogenase family. In terms of assembly, monomer. Acetylated, leading to enhanced enzyme activity. Acetylation is enhanced by up to 80% after treatment either with trichostin A (TCA) or with nicotinamide (NAM) with highest increase on Lys-345. Acetylation and enzyme activity increased by about 1.5% on addition of fatty acids.

The protein resides in the peroxisome. It catalyses the reaction a (3S)-3-hydroxyacyl-CoA = a (2E)-enoyl-CoA + H2O. The enzyme catalyses a 4-saturated-(3S)-3-hydroxyacyl-CoA = a (3E)-enoyl-CoA + H2O. The catalysed reaction is a (3Z)-enoyl-CoA = a 4-saturated (2E)-enoyl-CoA. It carries out the reaction a (3E)-enoyl-CoA = a 4-saturated (2E)-enoyl-CoA. It catalyses the reaction a (3S)-3-hydroxyacyl-CoA + NAD(+) = a 3-oxoacyl-CoA + NADH + H(+). The enzyme catalyses (2S,3S)-3-hydroxy-2-methylbutanoyl-CoA = (2E)-2-methylbut-2-enoyl-CoA + H2O. The catalysed reaction is (3E,5Z)-tetradecadienoyl-CoA = (2E,5Z)-tetradecadienoyl-CoA. It carries out the reaction (3E,5Z)-octadienoyl-CoA = (2E,5Z)-octadienoyl-CoA. It catalyses the reaction (3S)-hydroxydecanoyl-CoA + NAD(+) = 3-oxodecanoyl-CoA + NADH + H(+). The enzyme catalyses (3E)-decenoyl-CoA = (2E)-decenoyl-CoA. The catalysed reaction is (3Z)-hexenoyl-CoA = (2E)-hexenoyl-CoA. It carries out the reaction (3E)-hexenoyl-CoA = (2E)-hexenoyl-CoA. It catalyses the reaction (3S)-hydroxydecanoyl-CoA = (2E)-decenoyl-CoA + H2O. The enzyme catalyses (3S)-hydroxyhexanoyl-CoA = (2E)-hexenoyl-CoA + H2O. The catalysed reaction is (3S)-hydroxyhexadecanoyl-CoA + NAD(+) = 3-oxohexadecanoyl-CoA + NADH + H(+). It carries out the reaction (3S)-hydroxyhexadecanoyl-CoA = (2E)-hexadecenoyl-CoA + H2O. It catalyses the reaction (2E)-hexadecenedioyl-CoA + H2O = (3S)-hydroxyhexadecanedioyl-CoA. The enzyme catalyses (3S)-hydroxyhexadecanedioyl-CoA + NAD(+) = 3-oxohexadecanedioyl-CoA + NADH + H(+). It participates in lipid metabolism; fatty acid beta-oxidation. Enzyme activity enhanced by acetylation. In terms of biological role, peroxisomal trifunctional enzyme possessing 2-enoyl-CoA hydratase, 3-hydroxyacyl-CoA dehydrogenase, and delta 3, delta 2-enoyl-CoA isomerase activities. Catalyzes two of the four reactions of the long chain fatty acids peroxisomal beta-oxidation pathway. Can also use branched-chain fatty acids such as 2-methyl-2E-butenoyl-CoA as a substrate, which is hydrated into (2S,3S)-3-hydroxy-2-methylbutanoyl-CoA. Optimal isomerase for 2,5 double bonds into 3,5 form isomerization in a range of enoyl-CoA species. Also able to isomerize both 3-cis and 3-trans double bonds into the 2-trans form in a range of enoyl-CoA species. Regulates the amount of medium-chain dicarboxylic fatty acids which are essential regulators of all fatty acid oxidation pathways. Also involved in the degradation of long-chain dicarboxylic acids through peroxisomal beta-oxidation. This Rattus norvegicus (Rat) protein is Peroxisomal bifunctional enzyme.